A 256-amino-acid polypeptide reads, in one-letter code: 5-keto-4-deoxy-D-glucarate aldolase (256 aa).

His50 acts as the Proton acceptor in catalysis. Gln151 serves as a coordination point for substrate. Glu153 lines the Mg(2+) pocket. Substrate-binding residues include Ser178 and Asp179. Asp179 is a binding site for Mg(2+).

The protein belongs to the HpcH/HpaI aldolase family. KDGluc aldolase subfamily. Homohexamer; trimer of dimers. Mg(2+) serves as cofactor.

The enzyme catalyses 5-dehydro-4-deoxy-D-glucarate = 2-hydroxy-3-oxopropanoate + pyruvate. The catalysed reaction is 2-dehydro-3-deoxy-D-glucarate = 2-hydroxy-3-oxopropanoate + pyruvate. It functions in the pathway carbohydrate acid metabolism; galactarate degradation; D-glycerate from galactarate: step 2/3. Its function is as follows. Catalyzes the reversible retro-aldol cleavage of both 5-keto-4-deoxy-D-glucarate and 2-keto-3-deoxy-D-glucarate to pyruvate and tartronic semialdehyde. The protein is 5-keto-4-deoxy-D-glucarate aldolase of Shigella boydii serotype 4 (strain Sb227).